Consider the following 501-residue polypeptide: MDLTSVLSLETWVLLAISLVLLYRLGTHKYDIFKKQGIPGPKPLPFLGNVLNYYKGIWTFDIECHKKYGKIWGLFEGQRPLFTVTDTEMIKNVLVKECYSIFTNRRDFGPVGIMSKAVSISKDEEWKRIRALLSPTFTSGKLKEMFPIIEQYGDILVKFLRREAEKGNPVTTKEVFGAYSMDVITSTAFGVSVDSLNNPKDLLWKGRKLLRFDFFDPLFLSVVLFPFLIPIYEKLNVSMFPKDSISFFRKFVDKTKENRLDYNQKHRVDFLQLMMNSHDNSKDSHKALSDMEIIAQSIIFIFAGYDTTSSTLSFALYLLATHPDVQKKLQEEIDIALPNKARPSYDKVMEMEYLDMVLNETLRLYPIGSRLERVCKQDVEMDGVFVPKGSIVMVPVFALHYDPQYWPEPEKFRPERFSKENKGSIDPYIFLPFGNGPRNCIGMRFALMNMKLALTKVLQNFSLQPCKETQIPMKLSRKAMLQPEKPIILKVVPRDAIITGA.

C440 contributes to the heme binding site.

The protein belongs to the cytochrome P450 family. The cofactor is heme. In terms of tissue distribution, expressed constitutively in liver.

Its subcellular location is the endoplasmic reticulum membrane. The protein localises to the microsome membrane. The enzyme catalyses an organic molecule + reduced [NADPH--hemoprotein reductase] + O2 = an alcohol + oxidized [NADPH--hemoprotein reductase] + H2O + H(+). Its function is as follows. Cytochromes P450 are a group of heme-thiolate monooxygenases. In liver microsomes, this enzyme is involved in an NADPH-dependent electron transport pathway. It oxidizes a variety of structurally unrelated compounds, including steroids, fatty acids, and xenobiotics. This chain is Cytochrome P450 3A31 (CYP3A31), found in Mesocricetus auratus (Golden hamster).